Here is a 915-residue protein sequence, read N- to C-terminus: MQQQHLFRLNILCLSLMTALPAYAENVQAGQAQEKQLDTIQVKAKKQKTRRDNEVTGLGKLVKTADTLSKEQVLDIRDLTRYDPGIAVVEQGRGASSGYSIRGMDKNRVSLTVDGLAQIQSYTAQAALGGTRTAGSSGAINEIEYENVKAVEISKGSNSVEQGSGALAGSVAFQTKTADDVIGEGRQWGIQSKTAYSGKNRGLTQSIALAGRIGGAEALLIRTGRHAGEIRAHEAAGRGVQSFNRLAPVDDGSKYAYFIVEEECKNGGHEKCKANPKKDVVGEDKRQTVSTRDYTGPNRFLADPLSYESRSWLFRPGFRFENKRHYIGGILERTQQTFDTRDMTVPAFLTKAVFDANQKQAGSLRGNGKYAGNHKYGGLFTSGENNAPVGAEYGTGVFYDETHTKSRYGLEYVYTNADKDTWADYARLSYDRQGIGLDNHFQQTHCSADGSDKYCRPSADKPFSYYKSDRVIYGESHKLLQAAFKKSFDTAKIRHNLSVNLGYDRFGSNLRHQDYYYQSANRAYSLKTPPQNNGKKTSPNGREKNPYWVSIGRGNVVTRQICLFGNNTYTDCTPRSINGKSYYAAVRDNVRLGRWADVGAGLRYDYRSTHSDDGSVSTGTHRTLSWNAGIVLKPADWLDLTYRTSTGFRLPSFAEMYGWRSGDKIKAVKIDPEKSFNKEAGIVFKGDFGNLEASWFNNAYRDLIVRGYEAQIKDGKEQVKGNPAYLNAQSARITGINILGKIDWNGVWDKLPEGWYSTFAYNRVRVRDIKKRADRTDIQSHLFDAIQPSRYVVGSGYDQPEGKWGVNGMLTYSKAKEITELLGSRALLNGNSRNTKATARRTRPWYIVDVSGYYTVKKHFTLRAGVYNLLNHRYVTWENVRQTAAGAVNQHKNVGVYNRYAAPGRNYTFSLEMKF.

Positions 1–24 (MQQQHLFRLNILCLSLMTALPAYA) are cleaved as a signal peptide. The TonB box motif lies at 38–45 (DTIQVKAK). Residues 51–176 (RDNEVTGLGK…LAGSVAFQTK (126 aa)) form the TBDR plug domain. In terms of domain architecture, TBDR beta-barrel spans 187 to 915 (QWGIQSKTAY…NYTFSLEMKF (729 aa)). The span at 526–540 (LKTPPQNNGKKTSPN) shows a compositional bias: polar residues. Positions 526–545 (LKTPPQNNGKKTSPNGREKN) are disordered. The short motif at 898-915 (NRYAAPGRNYTFSLEMKF) is the TonB C-terminal box element.

This sequence belongs to the TonB-dependent receptor family. As to quaternary structure, binds both human apo- and holo-transferrin (TF), via the TF C-terminus. Forms a large complex with TF and TbpB.

The protein resides in the cell outer membrane. Its function is as follows. Neisseria acquires iron by extracting it from serum transferrin (TF) in its human host. Acts as a TF receptor and is required for TF utilization. Binds both apo- and holo-TF, via the TF C-terminus. This is Transferrin-binding protein A from Neisseria gonorrhoeae.